We begin with the raw amino-acid sequence, 214 residues long: Cdc42 effector protein 2 (214 aa).

Serine 2 is subject to N-acetylserine. In terms of domain architecture, CRIB spans isoleucine 30–glycine 44. Serine 31, serine 101, serine 137, serine 141, and serine 145 each carry phosphoserine. A disordered region spans residues leucine 119–phenylalanine 177.

Belongs to the BORG/CEP family. In terms of assembly, interacts with CDC42 and RHOQ in a GTP-dependent manner, and with SEPT7.

It localises to the endomembrane system. Its subcellular location is the cytoplasm. It is found in the cytoskeleton. Its function is as follows. Probably involved in the organization of the actin cytoskeleton. May act downstream of CDC42 to induce actin filament assembly leading to cell shape changes. Induces pseudopodia formation in fibroblasts in a CDC42-dependent manner. This Mus musculus (Mouse) protein is Cdc42 effector protein 2 (Cdc42ep2).